The following is a 396-amino-acid chain: MPIANPAATAPYATRAEETRGRLFQEPESATRTAFQRDRDRIIHSGAFRRLKYKTQVFVYHEGDNYRTRLSHSLEVSQIARSVARVFGLDEDLSETLALAHDLGHTPFGHAGETALDSCMRDFGGFDHNAQTLRIVTKLEHRYARFDGLNLTWETLEGLVKHNGPVVTPGRSIADLPRAIAEYAETQDLELATYAGPEAQVAALADDIAYNNHDIDDGLRAGLFDIEDLMALPLVGDVFQRVMDRYPGLETTRVIHEAVRELIGTMIEDLLSETRSRLAEARPRSAADVRAMSRPLVGFTAEMTEHNAALKAFLFERMYRHYRVNRSMSKAQRIVRDLFSLLHGEPDQLAPEWQAGCDGPGGIKTARRVCDFIAGMTDKFAIEEHARLFDLHDPRA.

The HD domain occupies 69–211; it reads RLSHSLEVSQ…AALADDIAYN (143 aa).

Belongs to the dGTPase family. Type 2 subfamily.

This is Deoxyguanosinetriphosphate triphosphohydrolase-like protein from Parvibaculum lavamentivorans (strain DS-1 / DSM 13023 / NCIMB 13966).